A 236-amino-acid polypeptide reads, in one-letter code: NAD(P)H-hydrate epimerase (236 aa).

Residues 11–217 (AAALDRELMS…SIAKKYDFDV (207 aa)) enclose the YjeF N-terminal domain. 61 to 65 (NNGGD) lines the (6S)-NADPHX pocket. K(+) contacts are provided by asparagine 62 and aspartate 123. Residues 127-133 (GFSFSGE) and aspartate 156 each bind (6S)-NADPHX. K(+) is bound at residue serine 159.

The protein belongs to the NnrE/AIBP family. K(+) serves as cofactor.

The protein resides in the cytoplasm. It localises to the mitochondrion. The enzyme catalyses (6R)-NADHX = (6S)-NADHX. It carries out the reaction (6R)-NADPHX = (6S)-NADPHX. Its function is as follows. Catalyzes the epimerization of the S- and R-forms of NAD(P)HX, a damaged form of NAD(P)H that is a result of enzymatic or heat-dependent hydration. This is a prerequisite for the S-specific NAD(P)H-hydrate dehydratase to allow the repair of both epimers of NAD(P)HX. The sequence is that of NAD(P)H-hydrate epimerase from Neurospora crassa (strain ATCC 24698 / 74-OR23-1A / CBS 708.71 / DSM 1257 / FGSC 987).